Reading from the N-terminus, the 325-residue chain is MNFGLFFLNFQLKGMTSEAVLDNMIDTIALVDKDEYHFKTAFVNEHHFSKNGIVGAPMTAASFLLGLTERLHIGSLNQVITTHHPVRIAEEASLLDQMSDGRFILGLSDCVSDFEMDFFKRQRDSQQQQFEACYEILNDGITTNYCYANNDFYNFPKISINPHCISKENLKQYILATSMGVVEWAAKKGLPLTYRWSDTLAEKENYYQRYLTVAAENNVDITHVDHQFPLLVNINPDRDIAKQEMRDYIRGYIAEAYPNTDQEEKIEELIKQHAVGTEDEYYESSKYALEKTGSKNVLLSFESMKNKAAVIDLINMVNEKIKKNL.

The protein belongs to the bacterial luciferase oxidoreductase family. As to quaternary structure, heterodimer of an alpha and a beta chain.

It catalyses the reaction a long-chain fatty aldehyde + FMNH2 + O2 = a long-chain fatty acid + hnu + FMN + H2O + 2 H(+). Its function is as follows. Light-emitting reaction in luminous bacteria. The specific role of the beta subunit is unknown, but it is absolutely required for bioluminescence activity. The sequence is that of Alkanal monooxygenase beta chain (luxB) from Photobacterium leiognathi.